A 200-amino-acid polypeptide reads, in one-letter code: Dual specificity tyrosine-phosphorylation-regulated kinase 1A (200 aa).

Tyrosine 41 carries the phosphotyrosine; by autocatalysis modification. Lysine 58 lines the ATP pocket. The residue at position 76 (tyrosine 76) is a Phosphotyrosine; by autocatalysis. The residue at position 88 (serine 88) is a Phosphoserine; by autocatalysis. Residue threonine 122 is modified to Phosphothreonine; by autocatalysis.

Belongs to the protein kinase superfamily. CMGC Ser/Thr protein kinase family. MNB/DYRK subfamily. Interacts with RAD54L2/ARIP4. Interacts with CRY2. Interacts with RANBP9. Interacts with WDR68. Interacts with SIRT1. Post-translationally, can also autophosphorylate on serine and threonine residues (in vitro). Autophosphorylated on numerous tyrosine residues.

It localises to the nucleus. The enzyme catalyses L-tyrosyl-[protein] + ATP = O-phospho-L-tyrosyl-[protein] + ADP + H(+). It catalyses the reaction L-seryl-[protein] + ATP = O-phospho-L-seryl-[protein] + ADP + H(+). The catalysed reaction is L-threonyl-[protein] + ATP = O-phospho-L-threonyl-[protein] + ADP + H(+). It carries out the reaction [DNA-directed RNA polymerase] + ATP = phospho-[DNA-directed RNA polymerase] + ADP + H(+). With respect to regulation, inhibited by RANBP9. Dual-specificity kinase which possesses both serine/threonine and tyrosine kinase activities. Exhibits a substrate preference for proline at position P+1 and arginine at position P-3. Plays an important role in double-strand breaks (DSBs) repair following DNA damage. Mechanistically, phosphorylates RNF169 and increases its ability to block accumulation of TP53BP1 at the DSB sites thereby promoting homologous recombination repair (HRR). Also acts as a positive regulator of transcription by acting as a CTD kinase that mediates phosphorylation of the CTD (C-terminal domain) of the large subunit of RNA polymerase II (RNAP II) POLR2A. May play a role in a signaling pathway regulating nuclear functions of cell proliferation. Modulates alternative splicing by phosphorylating the splice factor SRSF6. Has pro-survival function and negatively regulates the apoptotic process. Promotes cell survival upon genotoxic stress through phosphorylation of SIRT1. This in turn inhibits p53/TP53 activity and apoptosis. Phosphorylates SEPTIN4, SEPTIN5 and SF3B1 at 'Thr-434'. In Oryctolagus cuniculus (Rabbit), this protein is Dual specificity tyrosine-phosphorylation-regulated kinase 1A.